Reading from the N-terminus, the 108-residue chain is Cell division topological specificity factor (108 aa).

The protein belongs to the MinE family.

Its function is as follows. Prevents the cell division inhibition by proteins MinC and MinD at internal division sites while permitting inhibition at polar sites. This ensures cell division at the proper site by restricting the formation of a division septum at the midpoint of the long axis of the cell. The protein is Cell division topological specificity factor of Prochlorococcus marinus (strain MIT 9215).